We begin with the raw amino-acid sequence, 247 residues long: MLRFIQKFSQASSKILKYSFPVGLRTSRTDILSLKMSLQQNFSPCPRPWLSSSFPAYMSKTQCYHTSPCSFKKQQKQALLARPSSTITYLTDSPKPALCVTLAGLIPFVAPPLVMLMTKTYIPILAFTQMAYGASFLSFLGGIRWGFALPEGSPAKPDYLNLASSAAPLFFSWFAFLISERLSEAIVTVIMGMGVAFHLELFLLPHYPNWFKALRIVVTLLATFSFIITLVVKSSFPEKGHKRPGQV.

A run of 5 helical transmembrane segments spans residues Ala97 to Met117, Ile122 to Gly142, Tyr159 to Ser179, Ala185 to Pro205, and Ile216 to Phe236.

The protein localises to the membrane. The chain is Transmembrane protein 69 (TMEM69) from Homo sapiens (Human).